Reading from the N-terminus, the 797-residue chain is Probable DNA polymerase (797 aa).

It belongs to the DNA polymerase type-B family.

Its subcellular location is the mitochondrion. The catalysed reaction is DNA(n) + a 2'-deoxyribonucleoside 5'-triphosphate = DNA(n+1) + diphosphate. The chain is Probable DNA polymerase from Agaricus bitorquis (Pavement mushroom).